The following is a 212-amino-acid chain: FMN-dependent NADH:quinone oxidoreductase (212 aa).

FMN-binding positions include Ser9, Ser15–Ser17, and Thr138–Gly141.

It belongs to the azoreductase type 1 family. In terms of assembly, homodimer. Requires FMN as cofactor.

It catalyses the reaction 2 a quinone + NADH + H(+) = 2 a 1,4-benzosemiquinone + NAD(+). The catalysed reaction is N,N-dimethyl-1,4-phenylenediamine + anthranilate + 2 NAD(+) = 2-(4-dimethylaminophenyl)diazenylbenzoate + 2 NADH + 2 H(+). Functionally, quinone reductase that provides resistance to thiol-specific stress caused by electrophilic quinones. Its function is as follows. Also exhibits azoreductase activity. Catalyzes the reductive cleavage of the azo bond in aromatic azo compounds to the corresponding amines. In Delftia acidovorans (strain DSM 14801 / SPH-1), this protein is FMN-dependent NADH:quinone oxidoreductase.